A 208-amino-acid polypeptide reads, in one-letter code: Thiamine-phosphate synthase (208 aa).

Residues 37-39 (QVR) and N70 contribute to the 4-amino-2-methyl-5-(diphosphooxymethyl)pyrimidine site. Residues D71 and D90 each coordinate Mg(2+). T109 lines the 4-amino-2-methyl-5-(diphosphooxymethyl)pyrimidine pocket. Position 135 to 137 (135 to 137 (TTS)) interacts with 2-[(2R,5Z)-2-carboxy-4-methylthiazol-5(2H)-ylidene]ethyl phosphate. 4-amino-2-methyl-5-(diphosphooxymethyl)pyrimidine is bound at residue K138. G166 serves as a coordination point for 2-[(2R,5Z)-2-carboxy-4-methylthiazol-5(2H)-ylidene]ethyl phosphate.

It belongs to the thiamine-phosphate synthase family. The cofactor is Mg(2+).

It carries out the reaction 2-[(2R,5Z)-2-carboxy-4-methylthiazol-5(2H)-ylidene]ethyl phosphate + 4-amino-2-methyl-5-(diphosphooxymethyl)pyrimidine + 2 H(+) = thiamine phosphate + CO2 + diphosphate. It catalyses the reaction 2-(2-carboxy-4-methylthiazol-5-yl)ethyl phosphate + 4-amino-2-methyl-5-(diphosphooxymethyl)pyrimidine + 2 H(+) = thiamine phosphate + CO2 + diphosphate. The enzyme catalyses 4-methyl-5-(2-phosphooxyethyl)-thiazole + 4-amino-2-methyl-5-(diphosphooxymethyl)pyrimidine + H(+) = thiamine phosphate + diphosphate. The protein operates within cofactor biosynthesis; thiamine diphosphate biosynthesis; thiamine phosphate from 4-amino-2-methyl-5-diphosphomethylpyrimidine and 4-methyl-5-(2-phosphoethyl)-thiazole: step 1/1. In terms of biological role, condenses 4-methyl-5-(beta-hydroxyethyl)thiazole monophosphate (THZ-P) and 2-methyl-4-amino-5-hydroxymethyl pyrimidine pyrophosphate (HMP-PP) to form thiamine monophosphate (TMP). This Salinispora arenicola (strain CNS-205) protein is Thiamine-phosphate synthase.